A 33-amino-acid polypeptide reads, in one-letter code: Mu-theraphotoxin-Ssp1a (33 aa).

3 disulfides stabilise this stretch: Cys-2–Cys-17, Cys-9–Cys-22, and Cys-16–Cys-29. Leu-33 bears the Leucine amide mark.

This sequence belongs to the neurotoxin 10 (Hwtx-1) family. 22 (Htx-4) subfamily. Expressed by the venom gland.

It localises to the secreted. In terms of biological role, gating modifier toxin that traps voltage-sensing domain II of voltage-gated sodium channels in the resting state without significantly altering the voltage-dependence of activation and inactivation, or delay in recovery from inactivation. Inhibits hNav1.7/SCN9A (IC(50)=134 nM), followed in rank order of potency by Nav1.6/SCN8A (IC(50)=191 nM), Nav1.2/SCN2A (IC(50)=239 nM), Nav1.3/SCN3A (IC(50)=547 nM) and Nav1.1/SCN1A (IC(50)=674 nM). Its binding to Nav1.2, Nav1.3 and Nav1.7 is slowly reversible and incomplete, with ~25% of Nav1.2, ~50% of Nav1.3 and ~40% of Nav1.7 channels recovering from block after a 30 minutes washout, respectively. Binds in the aqueous cleft formed between the S1-S2 and S3-S4 loops of each channel subtype, primarily targeting the S3-S4 loop. The protein is Mu-theraphotoxin-Ssp1a of Selenotypus sp. (Feather-legged tarantula).